We begin with the raw amino-acid sequence, 266 residues long: Undecaprenyl-diphosphatase (266 aa).

A run of 8 helical transmembrane segments spans residues 1-21, 39-59, 86-106, 117-137, 153-173, 190-210, 216-236, and 246-266; these read MDFL…FIPV, PGSS…FWYF, SIFI…LFVT, FSIA…DIST, FIGI…GATI, SFLL…ITSI, FPFL…LLAI, and NGLK…ILNL.

Belongs to the UppP family.

The protein localises to the cell inner membrane. It catalyses the reaction di-trans,octa-cis-undecaprenyl diphosphate + H2O = di-trans,octa-cis-undecaprenyl phosphate + phosphate + H(+). Catalyzes the dephosphorylation of undecaprenyl diphosphate (UPP). Confers resistance to bacitracin. This Prochlorococcus marinus (strain MIT 9515) protein is Undecaprenyl-diphosphatase.